A 211-amino-acid polypeptide reads, in one-letter code: Methylthioribulose-1-phosphate dehydratase (211 aa).

Residues H101 and H103 each coordinate Zn(2+).

The protein belongs to the aldolase class II family. MtnB subfamily. Requires Zn(2+) as cofactor.

It catalyses the reaction 5-(methylsulfanyl)-D-ribulose 1-phosphate = 5-methylsulfanyl-2,3-dioxopentyl phosphate + H2O. It functions in the pathway amino-acid biosynthesis; L-methionine biosynthesis via salvage pathway; L-methionine from S-methyl-5-thio-alpha-D-ribose 1-phosphate: step 2/6. Functionally, catalyzes the dehydration of methylthioribulose-1-phosphate (MTRu-1-P) into 2,3-diketo-5-methylthiopentyl-1-phosphate (DK-MTP-1-P). This Alcanivorax borkumensis (strain ATCC 700651 / DSM 11573 / NCIMB 13689 / SK2) protein is Methylthioribulose-1-phosphate dehydratase.